The following is a 349-amino-acid chain: Diacylglycerol O-acyltransferase 2B (349 aa).

Transmembrane regions (helical) follow at residues 44–64 (ICLI…ILIM) and 114–134 (YIMS…NFAT).

This sequence belongs to the diacylglycerol acyltransferase family.

The protein localises to the endoplasmic reticulum membrane. The catalysed reaction is an acyl-CoA + a 1,2-diacyl-sn-glycerol = a triacyl-sn-glycerol + CoA. Its pathway is glycerolipid metabolism; triacylglycerol biosynthesis. Functionally, catalyzes the terminal and only committed step in triacylglycerol synthesis by using diacylglycerol and fatty acyl CoA as substrates. Required for storage lipid synthesis. The protein is Diacylglycerol O-acyltransferase 2B (DGAT2B) of Umbelopsis ramanniana (Oleaginous fungus).